The primary structure comprises 446 residues: Argininosuccinate synthase (446 aa).

Residues 17 to 25 (AFSGGLDTS) and alanine 43 contribute to the ATP site. Tyrosine 99 contributes to the L-citrulline binding site. Glycine 129 and threonine 131 together coordinate ATP. Residues threonine 131, asparagine 135, and aspartate 136 each coordinate L-aspartate. Asparagine 135 contacts L-citrulline. Residue aspartate 136 coordinates ATP. L-citrulline-binding residues include arginine 139 and serine 192. Aspartate 194 is an ATP binding site. 3 residues coordinate L-citrulline: threonine 201, glutamate 203, and glutamate 280.

Belongs to the argininosuccinate synthase family. Type 2 subfamily. Homotetramer.

The protein localises to the cytoplasm. It catalyses the reaction L-citrulline + L-aspartate + ATP = 2-(N(omega)-L-arginino)succinate + AMP + diphosphate + H(+). The protein operates within amino-acid biosynthesis; L-arginine biosynthesis; L-arginine from L-ornithine and carbamoyl phosphate: step 2/3. The chain is Argininosuccinate synthase from Burkholderia mallei (strain NCTC 10247).